The sequence spans 647 residues: DNA mismatch repair protein MutL (647 aa).

The segment at 375-433 (KQEEPQAVKQPTQLWQPPKQEWQPPQSLVREEQSWQPSTKPIIEEPIQEEKSWDSNEEG) is disordered. Residues 387 to 400 (QLWQPPKQEWQPPQ) are compositionally biased toward low complexity.

It belongs to the DNA mismatch repair MutL/HexB family.

This protein is involved in the repair of mismatches in DNA. It is required for dam-dependent methyl-directed DNA mismatch repair. May act as a 'molecular matchmaker', a protein that promotes the formation of a stable complex between two or more DNA-binding proteins in an ATP-dependent manner without itself being part of a final effector complex. This chain is DNA mismatch repair protein MutL, found in Bacillus cereus (strain AH820).